The following is a 498-amino-acid chain: ADP,ATP carrier protein 1 (498 aa).

Over 1–33 (MNNPKNDNYLSELSKVIWPIERYENKKFLPMAF) the chain is Cytoplasmic. The helical transmembrane segment at 34 to 54 (MMFCILLNYSTLRSIKDGFVV) threads the bilayer. Residues Cys37 and Cys85 are joined by a disulfide bond. At 55-67 (TDIGAEAISFLKT) the chain is on the extracellular side. A helical membrane pass occupies residues 68 to 88 (YIVLPSAVIAMVIYVKLCDIL). Residues 89-92 (KQEN) lie on the Cytoplasmic side of the membrane. The helical transmembrane segment at 93-113 (VFYVITSFFLGYFALFAFVLY) threads the bilayer. The Extracellular portion of the chain corresponds to 114–147 (PYPDLVHPDPETIESWSVAYPNVKWFIRIVGKWS). Residues 148 to 168 (FASFYTMAELWGTMMLSLLFW) form a helical membrane-spanning segment. Over 169–184 (QFANQITKTDEAKRFY) the chain is Cytoplasmic. A helical membrane pass occupies residues 185-205 (SMFGLLANLALPVTSVIIGYC). Residues 206–218 (LHEKTQIVAEHLK) are Extracellular-facing. The chain crosses the membrane as a helical span at residues 219 to 239 (FVPLFVIMITSSFLVILTYRW). The Cytoplasmic segment spans residues 240–279 (MNKNVLTDPRLYDPALVKEKKAKAKMSLIDSFKMIFTSKY). The chain crosses the membrane as a helical span at residues 280–300 (VGYIALLLIAYGVSVNLVEGV). Topologically, residues 301–320 (WKSKVKELYPTKEAYTIYMG) are extracellular. Residues 321-341 (KFQFYQGWVAIAFMLIGSNIL) traverse the membrane as a helical segment. At 342-348 (RKVSWLT) the chain is on the cytoplasmic side. A helical transmembrane segment spans residues 349 to 369 (AAMITPLMMLITGAAFFAFIF). Over 370–379 (FDSVIAMHLT) the chain is Extracellular. A helical transmembrane segment spans residues 380 to 400 (GILASGPLALAVMIGMIQNVL). Residues 401 to 438 (SKGVKYSLFDATKNMAYIPLDKDLRVKGQAAVEVIGGR) lie on the Cytoplasmic side of the membrane. Position 436-442 (436-442 (GGRFGKS)) interacts with ATP. The helical transmembrane segment at 439–459 (FGKSGGAIIQSTFFILFPAFG) threads the bilayer. Topologically, residues 460 to 465 (FVEATP) are extracellular. A helical transmembrane segment spans residues 466–486 (YFASIFFVIVILWIYAVKGLN). Residues 487 to 498 (KEYKVLVNKTEK) are Cytoplasmic-facing.

Belongs to the ADP/ATP translocase tlc family.

It localises to the cell membrane. Provides the rickettsial cell with host ATP in exchange for rickettsial ADP. This is an obligate exchange system. This energy acquiring activity is an important component of rickettsial parasitism. This chain is ADP,ATP carrier protein 1 (tlcA), found in Rickettsia conorii (strain ATCC VR-613 / Malish 7).